The sequence spans 695 residues: Segment polarity protein dishevelled homolog DVL-1 (695 aa).

Residues 1–85 (MAETKIIYHM…RVVSWLVLAE (85 aa)) form the DIX domain. The disordered stretch occupies residues 89–235 (SDAGSQGTDS…QRLRQTDRAS (147 aa)). Residues 142–151 (SHRRERARRR) are compositionally biased toward basic residues. Basic and acidic residues predominate over residues 152 to 171 (NRDEAARTNGHPRGDRRRDL). A compositionally biased stretch (low complexity) spans 177–192 (SASTVLSSELESSSFI). Phosphoserine is present on serine 194. A compositionally biased stretch (low complexity) spans 201-214 (SRLSSSTEQSTSSR). Residues 215-228 (LVRKHKCRRRKQRL) show a composition bias toward basic residues. The 73-residue stretch at 251-323 (TVTLNMERHH…NDDAVRVLRE (73 aa)) folds into the PDZ domain. Residues 425 to 499 (PDSGLEIRDR…SEQCYYVFGD (75 aa)) form the DEP domain. Residues 559-580 (SCGSGSAGSQQSEGSKSSGSTR) show a composition bias toward low complexity. Residues 559–641 (SCGSGSAGSQ…SQASAVAPGL (83 aa)) form a disordered region. A compositionally biased stretch (polar residues) spans 622 to 635 (SQLSRGSSPRSQAS).

The protein belongs to the DSH family. Interacts with CXXC4. Interacts (via PDZ domain) with TMEM88. Interacts with BRD7 and INVS. Interacts (via PDZ domain) with VANGL1 and VANGL2 (via C-terminus). Interacts (via PDZ domain) with NXN. Interacts with ARRB1; the interaction is enhanced by phosphorylation of DVL1. Interacts with CYLD. Interacts (via PDZ domain) with RYK. Self-associates (via DIX domain) and forms higher homooligomers. Interacts (via PDZ domain) with DACT1 and FZD7, where DACT1 and FZD7 compete for the same binding site. Interacts (via DEP domain) with MUSK; the interaction is direct and mediates the formation a DVL1, MUSK and PAK1 ternary complex involved in AChR clustering. Interacts with DCDC2. Interacts with FOXK2. Interacts with PKD1 (via extracellular domain). Interacts (via PDZ domain) with CCDC88C/DAPLE; competes with CCDC88C for binding to frizzled receptor FZD7 and dissociates from CCDC88C following initiation of non-canonical Wnt signaling when CCDC88C displaces DVL1 from ligand-activated FZD7. Post-translationally, ubiquitinated; undergoes both 'Lys-48'-linked ubiquitination, leading to its subsequent degradation by the ubiquitin-proteasome pathway, and 'Lys-63'-linked ubiquitination. The interaction with INVS is required for ubiquitination. Deubiquitinated by CYLD, which acts on 'Lys-63'-linked ubiquitin chains. High levels are seen in the brain, testis and kidney, lower levels in the ovary, breast, muscle, liver and small intestine, and very low levels are seen in the spleen and thymus. A moderate level expression is seen in the heart.

Its subcellular location is the cell membrane. It is found in the cytoplasm. The protein resides in the cytosol. It localises to the cytoplasmic vesicle. In terms of biological role, participates in Wnt signaling by binding to the cytoplasmic C-terminus of frizzled family members and transducing the Wnt signal to down-stream effectors. Plays a role both in canonical and non-canonical Wnt signaling. Plays a role in the signal transduction pathways mediated by multiple Wnt genes. Required for LEF1 activation upon WNT1 and WNT3A signaling. DVL1 and PAK1 form a ternary complex with MUSK which is important for MUSK-dependent regulation of AChR clustering during the formation of the neuromuscular junction (NMJ). The polypeptide is Segment polarity protein dishevelled homolog DVL-1 (Dvl1) (Mus musculus (Mouse)).